We begin with the raw amino-acid sequence, 637 residues long: 1-deoxy-D-xylulose-5-phosphate synthase (637 aa).

Thiamine diphosphate-binding positions include His-75 and 116–118; that span reads AHS. Asp-147 contributes to the Mg(2+) binding site. Residues 148-149, Asn-177, Tyr-288, and Glu-370 each bind thiamine diphosphate; that span reads GA. Asn-177 contributes to the Mg(2+) binding site.

The protein belongs to the transketolase family. DXPS subfamily. In terms of assembly, homodimer. Requires Mg(2+) as cofactor. Thiamine diphosphate serves as cofactor.

The enzyme catalyses D-glyceraldehyde 3-phosphate + pyruvate + H(+) = 1-deoxy-D-xylulose 5-phosphate + CO2. It functions in the pathway metabolic intermediate biosynthesis; 1-deoxy-D-xylulose 5-phosphate biosynthesis; 1-deoxy-D-xylulose 5-phosphate from D-glyceraldehyde 3-phosphate and pyruvate: step 1/1. Functionally, catalyzes the acyloin condensation reaction between C atoms 2 and 3 of pyruvate and glyceraldehyde 3-phosphate to yield 1-deoxy-D-xylulose-5-phosphate (DXP). The chain is 1-deoxy-D-xylulose-5-phosphate synthase from Cupriavidus metallidurans (strain ATCC 43123 / DSM 2839 / NBRC 102507 / CH34) (Ralstonia metallidurans).